The primary structure comprises 213 residues: Thiamine-phosphate synthase (213 aa).

4-amino-2-methyl-5-(diphosphooxymethyl)pyrimidine is bound by residues 38–42 (QLREK) and aspartate 70. Mg(2+) contacts are provided by aspartate 71 and glutamate 90. Serine 109 contacts 4-amino-2-methyl-5-(diphosphooxymethyl)pyrimidine. Position 135 to 137 (135 to 137 (TQT)) interacts with 2-[(2R,5Z)-2-carboxy-4-methylthiazol-5(2H)-ylidene]ethyl phosphate. 4-amino-2-methyl-5-(diphosphooxymethyl)pyrimidine is bound at residue lysine 138. Residues glycine 165 and 185-186 (VS) each bind 2-[(2R,5Z)-2-carboxy-4-methylthiazol-5(2H)-ylidene]ethyl phosphate.

This sequence belongs to the thiamine-phosphate synthase family. The cofactor is Mg(2+).

It catalyses the reaction 2-[(2R,5Z)-2-carboxy-4-methylthiazol-5(2H)-ylidene]ethyl phosphate + 4-amino-2-methyl-5-(diphosphooxymethyl)pyrimidine + 2 H(+) = thiamine phosphate + CO2 + diphosphate. It carries out the reaction 2-(2-carboxy-4-methylthiazol-5-yl)ethyl phosphate + 4-amino-2-methyl-5-(diphosphooxymethyl)pyrimidine + 2 H(+) = thiamine phosphate + CO2 + diphosphate. The enzyme catalyses 4-methyl-5-(2-phosphooxyethyl)-thiazole + 4-amino-2-methyl-5-(diphosphooxymethyl)pyrimidine + H(+) = thiamine phosphate + diphosphate. It participates in cofactor biosynthesis; thiamine diphosphate biosynthesis; thiamine phosphate from 4-amino-2-methyl-5-diphosphomethylpyrimidine and 4-methyl-5-(2-phosphoethyl)-thiazole: step 1/1. Functionally, condenses 4-methyl-5-(beta-hydroxyethyl)thiazole monophosphate (THZ-P) and 2-methyl-4-amino-5-hydroxymethyl pyrimidine pyrophosphate (HMP-PP) to form thiamine monophosphate (TMP). This Lacticaseibacillus paracasei (strain ATCC 334 / BCRC 17002 / CCUG 31169 / CIP 107868 / KCTC 3260 / NRRL B-441) (Lactobacillus paracasei) protein is Thiamine-phosphate synthase.